The sequence spans 258 residues: Hydroxyacylglutathione hydrolase cytoplasmic (258 aa).

Residues histidine 54 and histidine 56 each contribute to the Zn(2+) site. Fe cation is bound by residues aspartate 58 and histidine 59. Zn(2+)-binding residues include histidine 112 and aspartate 135. Aspartate 135 provides a ligand contact to Fe cation. Substrate contacts are provided by residues 144 to 146 (KFF) and 174 to 176 (HEY). A Fe cation-binding site is contributed by histidine 174.

It belongs to the metallo-beta-lactamase superfamily. Glyoxalase II family. As to quaternary structure, homodimer. The cofactor is Fe(2+). Requires Zn(2+) as cofactor. It depends on Fe(3+) as a cofactor. In terms of tissue distribution, mainly expressed in flowers and flower buds. Also detected in roots and leaves.

The protein localises to the cytoplasm. The catalysed reaction is an S-(2-hydroxyacyl)glutathione + H2O = a 2-hydroxy carboxylate + glutathione + H(+). It participates in secondary metabolite metabolism; methylglyoxal degradation; (R)-lactate from methylglyoxal: step 2/2. In terms of biological role, thiolesterase that catalyzes the hydrolysis of S-D-lactoyl-glutathione to form glutathione and D-lactic acid. This chain is Hydroxyacylglutathione hydrolase cytoplasmic (GLX2-2), found in Arabidopsis thaliana (Mouse-ear cress).